The primary structure comprises 342 residues: 4-hydroxy-2-oxovalerate aldolase (342 aa).

One can recognise a Pyruvate carboxyltransferase domain in the interval 5 to 257; it reads ITLHDMTLRD…DTGVDVWKIQ (253 aa). 13-14 provides a ligand contact to substrate; that stretch reads RD. D14 serves as a coordination point for Mn(2+). Residue H17 is the Proton acceptor of the active site. 2 residues coordinate substrate: S167 and H196. Mn(2+) is bound by residues H196 and H198. Y287 provides a ligand contact to substrate.

It belongs to the 4-hydroxy-2-oxovalerate aldolase family.

The enzyme catalyses (S)-4-hydroxy-2-oxopentanoate = acetaldehyde + pyruvate. This chain is 4-hydroxy-2-oxovalerate aldolase, found in Acidovorax sp. (strain JS42).